The sequence spans 405 residues: Serine--glyoxylate aminotransferase (405 aa).

At K196 the chain carries N6-(pyridoxal phosphate)lysine.

Belongs to the class-V pyridoxal-phosphate-dependent aminotransferase family. Pyridoxal 5'-phosphate serves as cofactor.

It carries out the reaction glyoxylate + L-serine = 3-hydroxypyruvate + glycine. It functions in the pathway one-carbon metabolism; formaldehyde assimilation via serine pathway. In Hyphomicrobium methylovorum, this protein is Serine--glyoxylate aminotransferase (sgaA).